An 84-amino-acid chain; its full sequence is uncharacterized protein (84 aa).

This is an uncharacterized protein from Schizosaccharomyces pombe (strain 972 / ATCC 24843) (Fission yeast).